We begin with the raw amino-acid sequence, 657 residues long: MTFQLHAPFAPCGDQPEAIARLSAGVRNQVKSQVLLGTTGSGKTFTIANVVANVNLPTLVLAHNKTLAAQLYQEFREFFPNNAVEYFISYYDYYQPEAYIARSDTYIEKSLLINDEIDKLRLSATRSILERRDTLIVSSVSCIYGIGSPENYTSMALVLEVGKEYPRNILTAQLVKMHYQASPIPQRSAFRERGSVIDIFPAYESELALRLEFLNDTLTSIEYSDPLTMIPKESVPSATLYPGSHYVIPEAIREQAIRTIQEELEERMAFFDDRPIEKDRIFHRTTHDIEMIKEIGFCKGIENYSRHFTGAPPGAPPTCLLDYFPEDFLLIIDESHQTLPQIRAMYRGDQSRKQSLVEYGFRLPSAFDNRPLTYEEAQKYFRKVIYVSATPGDTEVQESSGHIVQQIIRPTGIPDPMPEIRPATGQVDDLLEEIRLRLSQKHEKILVISITKKLAEDMAGFLSELEIPAAYLHSGIETAERTQILTDLRSGVIDVLIGVNLLREGLDLPEVSLVAILDADKEGFLRSTSSLIQFCGRAARNINGKVIFYADQKTRSIEETLRETERRRQIQLDYNKEHNIVPKPIIKAIFANPILQTSKDSESPKESQRPLSKEDLEEQIKKYEALMQRAAKEFRFNEAAKYRDAMQACKEQLLYLF.

In terms of domain architecture, Helicase ATP-binding spans 24–409 (AGVRNQVKSQ…SGHIVQQIIR (386 aa)). 37–44 (GTTGSGKT) is an ATP binding site. Positions 90 to 113 (YYDYYQPEAYIARSDTYIEKSLLI) match the Beta-hairpin motif. The Helicase C-terminal domain maps to 426–589 (QVDDLLEEIR…IVPKPIIKAI (164 aa)). The region spanning 617 to 652 (EEQIKKYEALMQRAAKEFRFNEAAKYRDAMQACKEQ) is the UVR domain.

This sequence belongs to the UvrB family. As to quaternary structure, forms a heterotetramer with UvrA during the search for lesions. Interacts with UvrC in an incision complex.

The protein localises to the cytoplasm. Functionally, the UvrABC repair system catalyzes the recognition and processing of DNA lesions. A damage recognition complex composed of 2 UvrA and 2 UvrB subunits scans DNA for abnormalities. Upon binding of the UvrA(2)B(2) complex to a putative damaged site, the DNA wraps around one UvrB monomer. DNA wrap is dependent on ATP binding by UvrB and probably causes local melting of the DNA helix, facilitating insertion of UvrB beta-hairpin between the DNA strands. Then UvrB probes one DNA strand for the presence of a lesion. If a lesion is found the UvrA subunits dissociate and the UvrB-DNA preincision complex is formed. This complex is subsequently bound by UvrC and the second UvrB is released. If no lesion is found, the DNA wraps around the other UvrB subunit that will check the other stand for damage. The sequence is that of UvrABC system protein B from Chlamydia pneumoniae (Chlamydophila pneumoniae).